Reading from the N-terminus, the 633-residue chain is Hyphal wall protein 1 (633 aa).

An N-terminal signal peptide occupies residues 1–27 (MRLSTAQLIAIAYYMLSIGATVPQVDG). Disordered stretches follow at residues 40–306 (SYDY…TTTT) and 411–569 (CPLT…SGAI). Positions 42-114 (DYYQEPCDDY…DYPQQPQEPC (73 aa)) are enriched in low complexity. The stretch at 46 to 58 (EPCDDYPQQQQQQ) is one 1; approximate repeat. A 14 X 10 AA tandem repeats of [EVIQ]-P-[CDT]-D-[YNW]-P-[PQ]-[QI]-[QP]-[QDN] region spans residues 46-187 (EPCDDYPQQQ…PNIPTDWIPD (142 aa)). The 2; approximate repeat unit spans residues 59–69 (EPCDYPQQQQQ). Residues 70 to 81 (EEPCDYPQQQPQ) form a 3; approximate repeat. Repeat copies occupy residues 82-91 (EPCDYPQQPQ), 92-101 (EPCDYPQQPQ), 102-111 (EPCDYPQQPQ), 112-121 (EPCDNPPQPD), 122-131 (VPCDNPPQPD), 132-141 (VPCDNPPQPD), 142-151 (IPCDNPPQPD), 152-161 (IPCDNPPQPD), and 162-171 (QPDDNPPIPN). Over residues 115-171 (DNPPQPDVPCDNPPQPDVPCDNPPQPDIPCDNPPQPDIPCDNPPQPDQPDDNPPIPN) the composition is skewed to pro residues. The stretch at 172–179 (IPTDWIPN) is one 13; truncated repeat. Composition is skewed to low complexity over residues 172-183 (IPTDWIPNIPTD) and 193-306 (TTPA…TTTT). A 14; truncated repeat occupies 180–187 (IPTDWIPD). N-linked (GlcNAc...) asparagine glycosylation is found at Asn-240 and Asn-285. The segment covering 414 to 425 (TENTPGTDSTPE) has biased composition (polar residues). Positions 507–549 (ETKPAAPKSSAPATEPSPVAPGTESAPAGPGASSSPKSSVLAS) are enriched in low complexity. N-linked (GlcNAc...) asparagine glycosylation occurs at Asn-600. Residue Gly-612 is the site of GPI-anchor amidated glycine attachment. Positions 613–633 (AGNNMRLTFGAAIIGIAAFLI) are cleaved as a propeptide — removed in mature form.

This sequence belongs to the HWP1 family. Post-translationally, the GPI-anchor is attached to the protein in the endoplasmic reticulum and serves to target the protein to the cell surface. There, the glucosamine-inositol phospholipid moiety is cleaved off and the GPI-modified mannoprotein is covalently attached via its lipidless GPI glycan remnant to the 1,6-beta-glucan of the outer cell wall layer. N- and O-glycosylated.

Its subcellular location is the secreted. The protein localises to the cell wall. It localises to the membrane. Its function is as follows. Major hyphal cell wall protein which plays a role of adhesin and is required for mating, normal hyphal development, cell-to-cell adhesive functions necessary for biofilm integrity, attachment to host, and virulence. Promotes interactions with host and bacterial molecules, thus leading to effective colonization within polymicrobial communities. Plays a crucial role in gastrointestinal colonization, in mucosal symptomatic and asymptomatic infections, in vaginitis, as well as in lethal oroesophageal candidiasis, caused by the combined action of fungal virulence factors and host inflammatory responses when protective immunity is absent. The protein is Hyphal wall protein 1 of Candida albicans (strain WO-1) (Yeast).